Consider the following 84-residue polypeptide: Phosphoribosylformylglycinamidine synthase subunit PurS (84 aa).

Belongs to the PurS family. Homodimer. Part of the FGAM synthase complex composed of 1 PurL, 1 PurQ and 2 PurS subunits.

It localises to the cytoplasm. The enzyme catalyses N(2)-formyl-N(1)-(5-phospho-beta-D-ribosyl)glycinamide + L-glutamine + ATP + H2O = 2-formamido-N(1)-(5-O-phospho-beta-D-ribosyl)acetamidine + L-glutamate + ADP + phosphate + H(+). It functions in the pathway purine metabolism; IMP biosynthesis via de novo pathway; 5-amino-1-(5-phospho-D-ribosyl)imidazole from N(2)-formyl-N(1)-(5-phospho-D-ribosyl)glycinamide: step 1/2. Part of the phosphoribosylformylglycinamidine synthase complex involved in the purines biosynthetic pathway. Catalyzes the ATP-dependent conversion of formylglycinamide ribonucleotide (FGAR) and glutamine to yield formylglycinamidine ribonucleotide (FGAM) and glutamate. The FGAM synthase complex is composed of three subunits. PurQ produces an ammonia molecule by converting glutamine to glutamate. PurL transfers the ammonia molecule to FGAR to form FGAM in an ATP-dependent manner. PurS interacts with PurQ and PurL and is thought to assist in the transfer of the ammonia molecule from PurQ to PurL. This chain is Phosphoribosylformylglycinamidine synthase subunit PurS, found in Methanothermobacter thermautotrophicus (strain ATCC 29096 / DSM 1053 / JCM 10044 / NBRC 100330 / Delta H) (Methanobacterium thermoautotrophicum).